A 464-amino-acid chain; its full sequence is ATP synthase subunit beta (464 aa).

153–160 provides a ligand contact to ATP; sequence GGAGVGKT.

Belongs to the ATPase alpha/beta chains family. F-type ATPases have 2 components, CF(1) - the catalytic core - and CF(0) - the membrane proton channel. CF(1) has five subunits: alpha(3), beta(3), gamma(1), delta(1), epsilon(1). CF(0) has three main subunits: a(1), b(2) and c(9-12). The alpha and beta chains form an alternating ring which encloses part of the gamma chain. CF(1) is attached to CF(0) by a central stalk formed by the gamma and epsilon chains, while a peripheral stalk is formed by the delta and b chains.

The protein resides in the cell inner membrane. The catalysed reaction is ATP + H2O + 4 H(+)(in) = ADP + phosphate + 5 H(+)(out). Its function is as follows. Produces ATP from ADP in the presence of a proton gradient across the membrane. The catalytic sites are hosted primarily by the beta subunits. The sequence is that of ATP synthase subunit beta from Burkholderia lata (strain ATCC 17760 / DSM 23089 / LMG 22485 / NCIMB 9086 / R18194 / 383).